The chain runs to 158 residues: MTEAVETETVEPTTDEATAADVEPREPVYIDRPIQTVGRRKEAVVRVRLVPGTGKFNLDGRTLEAYFPNKVHQQLIKAPLVLVDRLESFDVYAHLDGGGPSGQAGALRLAIARALILVQPEDRPALKKAGFLTRDPRAIERKKYGLKKARKAPQYSKR.

A disordered region spans residues 1–20; the sequence is MTEAVETETVEPTTDEATAA. A compositionally biased stretch (low complexity) spans 10 to 20; sequence VEPTTDEATAA.

This sequence belongs to the universal ribosomal protein uS9 family.

This Mycobacterium sp. (strain JLS) protein is Small ribosomal subunit protein uS9.